The chain runs to 654 residues: Tumor necrosis factor alpha-induced protein 2 (654 aa).

Disordered stretches follow at residues 1–38 and 50–78; these read MSEASSEDLVPPLEAGAAPYREEEEAAKKKKEKKKKSK and GKKKKGQPSSAEPEDAAGSRQGLDGPPPT. The segment covering 28-38 has biased composition (basic residues); that stretch reads KKKKEKKKKSK.

Belongs to the SEC6 family.

Its function is as follows. May play a role as a mediator of inflammation and angiogenesis. This is Tumor necrosis factor alpha-induced protein 2 (TNFAIP2) from Homo sapiens (Human).